Reading from the N-terminus, the 113-residue chain is Putative pterin-4-alpha-carbinolamine dehydratase (113 aa).

Belongs to the pterin-4-alpha-carbinolamine dehydratase family.

It carries out the reaction (4aS,6R)-4a-hydroxy-L-erythro-5,6,7,8-tetrahydrobiopterin = (6R)-L-erythro-6,7-dihydrobiopterin + H2O. The chain is Putative pterin-4-alpha-carbinolamine dehydratase from Nitrosococcus oceani (strain ATCC 19707 / BCRC 17464 / JCM 30415 / NCIMB 11848 / C-107).